A 634-amino-acid polypeptide reads, in one-letter code: Chaperone protein HtpG (634 aa).

An a; substrate-binding region spans residues 1 to 344 (MSETATQNKE…SNDLPLNVSR (344 aa)). The b stretch occupies residues 345 to 561 (EILQDNKVTQ…DFEMGTQMAK (217 aa)). Residues 562 to 634 (LLEAAGQAAP…GAINELLTKR (73 aa)) form a c region.

Belongs to the heat shock protein 90 family. As to quaternary structure, homodimer.

Its subcellular location is the cytoplasm. In terms of biological role, molecular chaperone. Has ATPase activity. The polypeptide is Chaperone protein HtpG (Vibrio atlanticus (strain LGP32) (Vibrio splendidus (strain Mel32))).